The primary structure comprises 159 residues: Kojic acid related protein 6 (159 aa).

Its function is as follows. Negatively regulates mycelium growth and conidial formation and is required for stress tolerance. Plays a role in kojic acid synthesis in coordination with kojA, kojR and kojT where it acts upstream of kojA. This chain is Kojic acid related protein 6, found in Aspergillus oryzae (strain ATCC 42149 / RIB 40) (Yellow koji mold).